We begin with the raw amino-acid sequence, 936 residues long: MTTGFLQKIFGSRNQRLVKQYQKTVAAINALEPQIEQLTDDQLRAKTTEFRQRVSSGESLDKLLPEAFAVCREASKRVLKMRHFDVQLIGGMVLHYGKIAEMRTGEGKTLVATLPVYLNALSGRGVHVVTVNDYLAQRDAEWMARLYNFLGMSVGINLSQMDHGLKQEAYAADITYGTNNEFGFDYLRDNMVYETDARVQRTLNFAVVDEVDSILIDEARTPLIISGQAEDHTELYVRMNALPPLLDRQIGEEKADGTGVEKPGDYTLDEKARQVFLTESGHEKAERLLAEWGLIGEGESLYAPQNITLMHHVYAALRAHTLFYKDQHYVVQNGEVVIVDEFTGRLMAGRRWSDGLHQAVEAKEHVKIQSENQTLASITFQNYFRMYAKLSGMTGTADTEAYEFNEIYGLETVVIPTNRPPKRIDKQDQIYKTAMERYNAVIRDIRDCYDRGQPVLVGTTSIENSELLSQLLNKAGLPHEVLNAKQHAREAAIVAEAGRPKRITIATNMAGRGTDIVLGGNAEKQAAFIEADLSIPEEEKAPRIQKLHDEWQTLHDQVKAAGGLHIIGTERHESRRIDNQLRGRAGRQGDPGSSRFYLSLEDPLLRIFAGDRVRAIMDRLKMPEGEAIEAGIVTRSIESAQRKVEARNFDIRKQLLEYDDVSNDQRKVIYQQRNELLEAHDITETIGAMRHGVITDIVRQFVPAGSIEEQWDVPELEEALRNDWQLDLAIQEMINESQSIDPDEILEAVLAAADEAYESKVEQVGRESFSAFERSVMLQTLDRSWREHLAALDHLRQGIHLRGYAQKNPKQEYKREAFELFAAMLDSVKLEVTRIVMNVQIQSPEQLEQAAEQMEEQGSHLENVEFRHADYSEGGAAVAAAPVAANAAAAMIGDAMAHGGSAAAPFSGDAVPKVGRNDPCPCGSGKKYKQCHGKIA.

Residues Gln-87, 105 to 109 (GEGKT), and Asp-515 contribute to the ATP site. Residues Cys-920, Cys-922, Cys-931, and His-932 each coordinate Zn(2+).

Belongs to the SecA family. As to quaternary structure, monomer and homodimer. Part of the essential Sec protein translocation apparatus which comprises SecA, SecYEG and auxiliary proteins SecDF-YajC and YidC. Zn(2+) serves as cofactor.

It localises to the cell inner membrane. It is found in the cytoplasm. The catalysed reaction is ATP + H2O + cellular proteinSide 1 = ADP + phosphate + cellular proteinSide 2.. Its function is as follows. Part of the Sec protein translocase complex. Interacts with the SecYEG preprotein conducting channel. Has a central role in coupling the hydrolysis of ATP to the transfer of proteins into and across the cell membrane, serving both as a receptor for the preprotein-SecB complex and as an ATP-driven molecular motor driving the stepwise translocation of polypeptide chains across the membrane. The polypeptide is Protein translocase subunit SecA (Paraburkholderia phymatum (strain DSM 17167 / CIP 108236 / LMG 21445 / STM815) (Burkholderia phymatum)).